A 337-amino-acid polypeptide reads, in one-letter code: Dihydroorotate dehydrogenase (quinone) (337 aa).

Residues 61–65 (AGLDK) and threonine 85 each bind FMN. Residue lysine 65 coordinates substrate. A substrate-binding site is contributed by 110–114 (NRMGF). FMN is bound by residues asparagine 138 and asparagine 171. Asparagine 171 contributes to the substrate binding site. Serine 174 serves as the catalytic Nucleophile. Asparagine 176 lines the substrate pocket. FMN is bound by residues lysine 216 and threonine 244. 245–246 (NT) provides a ligand contact to substrate. FMN is bound by residues glycine 267, glycine 296, and 317-318 (YS).

It belongs to the dihydroorotate dehydrogenase family. Type 2 subfamily. In terms of assembly, monomer. FMN serves as cofactor.

The protein localises to the cell membrane. The enzyme catalyses (S)-dihydroorotate + a quinone = orotate + a quinol. It participates in pyrimidine metabolism; UMP biosynthesis via de novo pathway; orotate from (S)-dihydroorotate (quinone route): step 1/1. Functionally, catalyzes the conversion of dihydroorotate to orotate with quinone as electron acceptor. This Thiobacillus denitrificans (strain ATCC 25259 / T1) protein is Dihydroorotate dehydrogenase (quinone).